Reading from the N-terminus, the 490-residue chain is uncharacterized protein (490 aa).

Over residues 370-385 (FSMKRPSSSSSSLSGS) the composition is skewed to low complexity. The disordered stretch occupies residues 370 to 406 (FSMKRPSSSSSSLSGSWHGDTENSVKQSLASPSEASL). Positions 391–406 (ENSVKQSLASPSEASL) are enriched in polar residues.

The protein localises to the cytoplasm. It localises to the nucleus. This is an uncharacterized protein from Schizosaccharomyces pombe (strain 972 / ATCC 24843) (Fission yeast).